A 185-amino-acid polypeptide reads, in one-letter code: Elongation factor P (185 aa).

The protein belongs to the elongation factor P family.

It is found in the cytoplasm. It participates in protein biosynthesis; polypeptide chain elongation. Involved in peptide bond synthesis. Stimulates efficient translation and peptide-bond synthesis on native or reconstituted 70S ribosomes in vitro. Probably functions indirectly by altering the affinity of the ribosome for aminoacyl-tRNA, thus increasing their reactivity as acceptors for peptidyl transferase. The polypeptide is Elongation factor P (Caldicellulosiruptor bescii (strain ATCC BAA-1888 / DSM 6725 / KCTC 15123 / Z-1320) (Anaerocellum thermophilum)).